Consider the following 276-residue polypeptide: Large ribosomal subunit protein uL2 (276 aa).

The interval 225–276 (MNPNDHPHGGGEGRNPIGRNPVTPWGKPALGAKTRKKKNPSNRFIVKRRGKK) is disordered. Residues 257-276 (KTRKKKNPSNRFIVKRRGKK) are compositionally biased toward basic residues.

Belongs to the universal ribosomal protein uL2 family. Part of the 50S ribosomal subunit. Forms a bridge to the 30S subunit in the 70S ribosome.

Functionally, one of the primary rRNA binding proteins. Required for association of the 30S and 50S subunits to form the 70S ribosome, for tRNA binding and peptide bond formation. It has been suggested to have peptidyltransferase activity; this is somewhat controversial. Makes several contacts with the 16S rRNA in the 70S ribosome. The polypeptide is Large ribosomal subunit protein uL2 (Desulfitobacterium hafniense (strain DSM 10664 / DCB-2)).